Consider the following 65-residue polypeptide: Small ribosomal subunit protein bS21 (65 aa).

This sequence belongs to the bacterial ribosomal protein bS21 family.

The chain is Small ribosomal subunit protein bS21 from Flavobacterium psychrophilum (strain ATCC 49511 / DSM 21280 / CIP 103535 / JIP02/86).